Here is a 246-residue protein sequence, read N- to C-terminus: Enolase-phosphatase E1 (246 aa).

The Mg(2+) site is built by D15 and E17. Substrate contacts are provided by residues 134–135 and K174; that span reads SS. D201 provides a ligand contact to Mg(2+).

Belongs to the HAD-like hydrolase superfamily. MasA/MtnC family. As to quaternary structure, monomer. Mg(2+) is required as a cofactor.

The protein resides in the cytoplasm. It localises to the nucleus. The enzyme catalyses 5-methylsulfanyl-2,3-dioxopentyl phosphate + H2O = 1,2-dihydroxy-5-(methylsulfanyl)pent-1-en-3-one + phosphate. Its pathway is amino-acid biosynthesis; L-methionine biosynthesis via salvage pathway; L-methionine from S-methyl-5-thio-alpha-D-ribose 1-phosphate: step 3/6. The protein operates within amino-acid biosynthesis; L-methionine biosynthesis via salvage pathway; L-methionine from S-methyl-5-thio-alpha-D-ribose 1-phosphate: step 4/6. Functionally, bifunctional enzyme that catalyzes the enolization of 2,3-diketo-5-methylthiopentyl-1-phosphate (DK-MTP-1-P) into the intermediate 2-hydroxy-3-keto-5-methylthiopentenyl-1-phosphate (HK-MTPenyl-1-P), which is then dephosphorylated to form the acireductone 1,2-dihydroxy-3-keto-5-methylthiopentene (DHK-MTPene). This Debaryomyces hansenii (strain ATCC 36239 / CBS 767 / BCRC 21394 / JCM 1990 / NBRC 0083 / IGC 2968) (Yeast) protein is Enolase-phosphatase E1.